The chain runs to 496 residues: Maturase K (496 aa).

This sequence belongs to the intron maturase 2 family. MatK subfamily.

The protein resides in the plastid. It localises to the chloroplast. In terms of biological role, usually encoded in the trnK tRNA gene intron. Probably assists in splicing its own and other chloroplast group II introns. In Paeonia officinalis (Common peony), this protein is Maturase K.